A 1014-amino-acid chain; its full sequence is Isoleucine--tRNA ligase (1014 aa).

The 'HIGH' region motif lies at 48 to 58; the sequence is PTANGRPGIHH. A 'KMSKS' region motif is present at residues 628 to 632; that stretch reads KMSKS. ATP is bound at residue Lys-631.

Belongs to the class-I aminoacyl-tRNA synthetase family. IleS type 2 subfamily. In terms of assembly, monomer. Zn(2+) serves as cofactor.

It is found in the cytoplasm. It carries out the reaction tRNA(Ile) + L-isoleucine + ATP = L-isoleucyl-tRNA(Ile) + AMP + diphosphate. Functionally, catalyzes the attachment of isoleucine to tRNA(Ile). As IleRS can inadvertently accommodate and process structurally similar amino acids such as valine, to avoid such errors it has two additional distinct tRNA(Ile)-dependent editing activities. One activity is designated as 'pretransfer' editing and involves the hydrolysis of activated Val-AMP. The other activity is designated 'posttransfer' editing and involves deacylation of mischarged Val-tRNA(Ile). The polypeptide is Isoleucine--tRNA ligase (Dehalococcoides mccartyi (strain ATCC BAA-2266 / KCTC 15142 / 195) (Dehalococcoides ethenogenes (strain 195))).